The sequence spans 255 residues: Hydroxyacylglutathione hydrolase (255 aa).

Zn(2+) contacts are provided by histidine 52, histidine 54, aspartate 56, histidine 57, histidine 108, aspartate 130, and histidine 168.

Belongs to the metallo-beta-lactamase superfamily. Glyoxalase II family. In terms of assembly, monomer. The cofactor is Zn(2+).

The catalysed reaction is an S-(2-hydroxyacyl)glutathione + H2O = a 2-hydroxy carboxylate + glutathione + H(+). It functions in the pathway secondary metabolite metabolism; methylglyoxal degradation; (R)-lactate from methylglyoxal: step 2/2. In terms of biological role, thiolesterase that catalyzes the hydrolysis of S-D-lactoyl-glutathione to form glutathione and D-lactic acid. The protein is Hydroxyacylglutathione hydrolase of Albidiferax ferrireducens (strain ATCC BAA-621 / DSM 15236 / T118) (Rhodoferax ferrireducens).